Reading from the N-terminus, the 247-residue chain is Malonyl-[acyl-carrier protein] O-methyltransferase (247 aa).

It belongs to the methyltransferase superfamily.

The enzyme catalyses malonyl-[ACP] + S-adenosyl-L-methionine = malonyl-[ACP] methyl ester + S-adenosyl-L-homocysteine. The protein operates within cofactor biosynthesis; biotin biosynthesis. In terms of biological role, converts the free carboxyl group of a malonyl-thioester to its methyl ester by transfer of a methyl group from S-adenosyl-L-methionine (SAM). It allows to synthesize pimeloyl-ACP via the fatty acid synthetic pathway. This is Malonyl-[acyl-carrier protein] O-methyltransferase from Buchnera aphidicola subsp. Baizongia pistaciae (strain Bp).